A 127-amino-acid chain; its full sequence is Ribosome-binding factor A (127 aa).

It belongs to the RbfA family. As to quaternary structure, monomer. Binds 30S ribosomal subunits, but not 50S ribosomal subunits or 70S ribosomes.

The protein resides in the cytoplasm. Functionally, one of several proteins that assist in the late maturation steps of the functional core of the 30S ribosomal subunit. Associates with free 30S ribosomal subunits (but not with 30S subunits that are part of 70S ribosomes or polysomes). Required for efficient processing of 16S rRNA. May interact with the 5'-terminal helix region of 16S rRNA. The sequence is that of Ribosome-binding factor A from Rickettsia typhi (strain ATCC VR-144 / Wilmington).